Consider the following 151-residue polypeptide: Homeobox protein HD-1 (151 aa).

Positions 87–146 (ESIKSRRFPKFITEALERSFEIDQYPSEAEKARLAKICKLSTKQINNWFTNKRNRTKGHE) form a DNA-binding region, homeobox.

It localises to the nucleus. This Encephalitozoon cuniculi (strain GB-M1) (Microsporidian parasite) protein is Homeobox protein HD-1 (HD-1).